The chain runs to 217 residues: 3,4-dihydroxy-2-butanone 4-phosphate synthase (217 aa).

D-ribulose 5-phosphate contacts are provided by residues 37–38 (RE), Asp42, 150–154 (RGGHT), and Glu174. Glu38 provides a ligand contact to Mg(2+). Mg(2+) is bound at residue His153.

Belongs to the DHBP synthase family. In terms of assembly, homodimer. Mg(2+) serves as cofactor. The cofactor is Mn(2+).

The enzyme catalyses D-ribulose 5-phosphate = (2S)-2-hydroxy-3-oxobutyl phosphate + formate + H(+). The protein operates within cofactor biosynthesis; riboflavin biosynthesis; 2-hydroxy-3-oxobutyl phosphate from D-ribulose 5-phosphate: step 1/1. Its function is as follows. Catalyzes the conversion of D-ribulose 5-phosphate to formate and 3,4-dihydroxy-2-butanone 4-phosphate. This is 3,4-dihydroxy-2-butanone 4-phosphate synthase from Shigella boydii serotype 18 (strain CDC 3083-94 / BS512).